Consider the following 158-residue polypeptide: NAD(P)H-quinone oxidoreductase subunit N (158 aa).

It belongs to the complex I NdhN subunit family. In terms of assembly, NDH-1 can be composed of about 15 different subunits; different subcomplexes with different compositions have been identified which probably have different functions.

The protein localises to the cellular thylakoid membrane. It carries out the reaction a plastoquinone + NADH + (n+1) H(+)(in) = a plastoquinol + NAD(+) + n H(+)(out). The enzyme catalyses a plastoquinone + NADPH + (n+1) H(+)(in) = a plastoquinol + NADP(+) + n H(+)(out). Functionally, NDH-1 shuttles electrons from an unknown electron donor, via FMN and iron-sulfur (Fe-S) centers, to quinones in the respiratory and/or the photosynthetic chain. The immediate electron acceptor for the enzyme in this species is believed to be plastoquinone. Couples the redox reaction to proton translocation, and thus conserves the redox energy in a proton gradient. Cyanobacterial NDH-1 also plays a role in inorganic carbon-concentration. In Gloeothece citriformis (strain PCC 7424) (Cyanothece sp. (strain PCC 7424)), this protein is NAD(P)H-quinone oxidoreductase subunit N.